We begin with the raw amino-acid sequence, 502 residues long: UPF0371 protein CLK_3516 (502 aa).

The protein belongs to the UPF0371 family.

The polypeptide is UPF0371 protein CLK_3516 (Clostridium botulinum (strain Loch Maree / Type A3)).